The primary structure comprises 426 residues: High affinity 3',5'-cyclic-AMP phosphodiesterase 7A (426 aa).

The PDEase domain maps to 80 to 402 (LDEDYNGQAK…ASWKGLQRQQ (323 aa)). The active-site Proton donor is H156. Residues H160, H196, D197, and D306 each contribute to the a divalent metal cation site.

This sequence belongs to the cyclic nucleotide phosphodiesterase family. PDE7 subfamily. In terms of assembly, interacts with CBFA2T3. A divalent metal cation is required as a cofactor.

Its subcellular location is the cytoplasm. The protein localises to the cytosol. It carries out the reaction 3',5'-cyclic AMP + H2O = AMP + H(+). The protein operates within purine metabolism; 3',5'-cyclic AMP degradation; AMP from 3',5'-cyclic AMP: step 1/1. In terms of biological role, hydrolyzes the second messenger cAMP, which is a key regulator of many important physiological processes. May have a role in muscle signal transduction. In Rattus norvegicus (Rat), this protein is High affinity 3',5'-cyclic-AMP phosphodiesterase 7A (Pde7a).